The sequence spans 736 residues: Phosphoribosylformylglycinamidine synthase subunit PurL (736 aa).

The active site involves histidine 49. Tyrosine 52 and lysine 91 together coordinate ATP. Glutamate 93 is a binding site for Mg(2+). Substrate-binding positions include 94–97 and arginine 116; that span reads SHNH. Residue histidine 95 is the Proton acceptor of the active site. Aspartate 117 serves as a coordination point for Mg(2+). Position 240 (glutamine 240) interacts with substrate. Residue aspartate 268 participates in Mg(2+) binding. 312–314 contributes to the substrate binding site; the sequence is ESQ. Aspartate 493 and glycine 530 together coordinate ATP. Asparagine 531 contributes to the Mg(2+) binding site. A substrate-binding site is contributed by serine 533.

This sequence belongs to the FGAMS family. In terms of assembly, monomer. Part of the FGAM synthase complex composed of 1 PurL, 1 PurQ and 2 PurS subunits.

It localises to the cytoplasm. It catalyses the reaction N(2)-formyl-N(1)-(5-phospho-beta-D-ribosyl)glycinamide + L-glutamine + ATP + H2O = 2-formamido-N(1)-(5-O-phospho-beta-D-ribosyl)acetamidine + L-glutamate + ADP + phosphate + H(+). Its pathway is purine metabolism; IMP biosynthesis via de novo pathway; 5-amino-1-(5-phospho-D-ribosyl)imidazole from N(2)-formyl-N(1)-(5-phospho-D-ribosyl)glycinamide: step 1/2. Part of the phosphoribosylformylglycinamidine synthase complex involved in the purines biosynthetic pathway. Catalyzes the ATP-dependent conversion of formylglycinamide ribonucleotide (FGAR) and glutamine to yield formylglycinamidine ribonucleotide (FGAM) and glutamate. The FGAM synthase complex is composed of three subunits. PurQ produces an ammonia molecule by converting glutamine to glutamate. PurL transfers the ammonia molecule to FGAR to form FGAM in an ATP-dependent manner. PurS interacts with PurQ and PurL and is thought to assist in the transfer of the ammonia molecule from PurQ to PurL. The polypeptide is Phosphoribosylformylglycinamidine synthase subunit PurL (Rhodopseudomonas palustris (strain ATCC BAA-98 / CGA009)).